Reading from the N-terminus, the 418-residue chain is Glutamyl-tRNA reductase (418 aa).

Residues 49-52 (TCNR), serine 108, 113-115 (EPQ), and glutamine 119 contribute to the substrate site. The Nucleophile role is filled by cysteine 50. 188–193 (GAGETI) is a binding site for NADP(+).

Belongs to the glutamyl-tRNA reductase family. In terms of assembly, homodimer.

The catalysed reaction is (S)-4-amino-5-oxopentanoate + tRNA(Glu) + NADP(+) = L-glutamyl-tRNA(Glu) + NADPH + H(+). The protein operates within porphyrin-containing compound metabolism; protoporphyrin-IX biosynthesis; 5-aminolevulinate from L-glutamyl-tRNA(Glu): step 1/2. In terms of biological role, catalyzes the NADPH-dependent reduction of glutamyl-tRNA(Glu) to glutamate 1-semialdehyde (GSA). This Aliivibrio fischeri (strain MJ11) (Vibrio fischeri) protein is Glutamyl-tRNA reductase.